The following is a 595-amino-acid chain: Glutamyl-tRNA(Gln) amidotransferase subunit B, mitochondrial (595 aa).

The N-terminal 72 residues, 1–72 (MPRLWYSRYL…RAKSQSRNGR (72 aa)), are a transit peptide targeting the mitochondrion.

It belongs to the GatB/GatE family. GatB subfamily. Subunit of the heterotrimeric GatCAB amidotransferase (AdT) complex, composed of A, B and C subunits.

The protein localises to the mitochondrion. It carries out the reaction L-glutamyl-tRNA(Gln) + L-glutamine + ATP + H2O = L-glutaminyl-tRNA(Gln) + L-glutamate + ADP + phosphate + H(+). In terms of biological role, allows the formation of correctly charged Gln-tRNA(Gln) through the transamidation of misacylated Glu-tRNA(Gln) in the mitochondria. The reaction takes place in the presence of glutamine and ATP through an activated gamma-phospho-Glu-tRNA(Gln). This is Glutamyl-tRNA(Gln) amidotransferase subunit B, mitochondrial from Talaromyces marneffei (strain ATCC 18224 / CBS 334.59 / QM 7333) (Penicillium marneffei).